Reading from the N-terminus, the 510-residue chain is 2,3-bisphosphoglycerate-independent phosphoglycerate mutase (510 aa).

D10 and S60 together coordinate Mn(2+). Residue S60 is the Phosphoserine intermediate of the active site. Substrate-binding positions include H121, 150–151 (RD), R182, R188, 252–255 (RPDR), and K325. Positions 392, 396, 433, 434, and 451 each coordinate Mn(2+).

This sequence belongs to the BPG-independent phosphoglycerate mutase family. Requires Mn(2+) as cofactor.

The protein resides in the plastid. Its subcellular location is the chloroplast. It carries out the reaction (2R)-2-phosphoglycerate = (2R)-3-phosphoglycerate. The protein operates within carbohydrate degradation; glycolysis; pyruvate from D-glyceraldehyde 3-phosphate: step 3/5. Catalyzes the interconversion of 2-phosphoglycerate and 3-phosphoglycerate. The polypeptide is 2,3-bisphosphoglycerate-independent phosphoglycerate mutase (Gracilaria tenuistipitata var. liui (Red alga)).